The sequence spans 415 residues: Glucose-1-phosphate adenylyltransferase (415 aa).

Residues tyrosine 98, glycine 163, 178–179 (EK), and serine 189 contribute to the alpha-D-glucose 1-phosphate site.

Belongs to the bacterial/plant glucose-1-phosphate adenylyltransferase family. Homotetramer.

The catalysed reaction is alpha-D-glucose 1-phosphate + ATP + H(+) = ADP-alpha-D-glucose + diphosphate. The protein operates within glycan biosynthesis; glycogen biosynthesis. In terms of biological role, involved in the biosynthesis of ADP-glucose, a building block required for the elongation reactions to produce glycogen. Catalyzes the reaction between ATP and alpha-D-glucose 1-phosphate (G1P) to produce pyrophosphate and ADP-Glc. The protein is Glucose-1-phosphate adenylyltransferase of Fervidobacterium nodosum (strain ATCC 35602 / DSM 5306 / Rt17-B1).